Reading from the N-terminus, the 74-residue chain is Mitochondrial import receptor subunit TOM6 homolog (74 aa).

Residues 1-14 (MASSGAGVTAAGSA) show a composition bias toward low complexity. The tract at residues 1-24 (MASSGAGVTAAGSANEAPEIPDNV) is disordered. The residue at position 2 (alanine 2) is an N-acetylalanine.

It belongs to the Tom6 family. As to quaternary structure, forms part of the preprotein translocase complex of the outer mitochondrial membrane (TOM complex) which consists of at least 7 different proteins (TOMM5, TOMM6, TOMM7, TOMM20, TOMM22, TOMM40 and TOMM70).

The protein localises to the mitochondrion outer membrane. This chain is Mitochondrial import receptor subunit TOM6 homolog (TOMM6), found in Bos taurus (Bovine).